A 509-amino-acid chain; its full sequence is Cardiolipin synthase 1 (509 aa).

The next 3 membrane-spanning stretches (helical) occupy residues 4–24 (PIVQ…LLNT), 30–50 (YTFV…VIFI), and 59–79 (LAWF…YAIF). PLD phosphodiesterase domains lie at 238–265 (VNYR…GDEY) and 422–449 (KDGF…DVRS). Active-site residues include histidine 243, lysine 245, aspartate 250, histidine 427, lysine 429, and aspartate 434.

It belongs to the phospholipase D family. Cardiolipin synthase subfamily.

It is found in the cell membrane. It catalyses the reaction 2 a 1,2-diacyl-sn-glycero-3-phospho-(1'-sn-glycerol) = a cardiolipin + glycerol. Functionally, catalyzes the reversible phosphatidyl group transfer from one phosphatidylglycerol molecule to another to form cardiolipin (CL) (diphosphatidylglycerol) and glycerol. The polypeptide is Cardiolipin synthase 1 (cls1) (Bacillus cereus (strain ATCC 14579 / DSM 31 / CCUG 7414 / JCM 2152 / NBRC 15305 / NCIMB 9373 / NCTC 2599 / NRRL B-3711)).